Reading from the N-terminus, the 673-residue chain is UvrABC system protein B (673 aa).

The Helicase ATP-binding domain maps to 26–414 (ANFEAGLAKQ…AGEVTELVVR (389 aa)). 39-46 (GVTGSGKT) contributes to the ATP binding site. The Beta-hairpin motif lies at 92–115 (YYDYYQPEAYVPSSDTFIEKDSSI). The region spanning 431-597 (QVDDLMSEVH…SVERPIADIM (167 aa)) is the Helicase C-terminal domain. Basic and acidic residues-rich tracts occupy residues 600–609 (ARDDAAEKKS) and 618–628 (HVAEETPDYRA). Positions 600–628 (ARDDAAEKKSGKGRSKSRHVAEETPDYRA) are disordered. Positions 635–670 (AGKLKSLEQKMYQHAKDLEFEAAAQIRDQIQKLKAA) constitute a UVR domain.

It belongs to the UvrB family. Forms a heterotetramer with UvrA during the search for lesions. Interacts with UvrC in an incision complex.

It localises to the cytoplasm. Its function is as follows. The UvrABC repair system catalyzes the recognition and processing of DNA lesions. A damage recognition complex composed of 2 UvrA and 2 UvrB subunits scans DNA for abnormalities. Upon binding of the UvrA(2)B(2) complex to a putative damaged site, the DNA wraps around one UvrB monomer. DNA wrap is dependent on ATP binding by UvrB and probably causes local melting of the DNA helix, facilitating insertion of UvrB beta-hairpin between the DNA strands. Then UvrB probes one DNA strand for the presence of a lesion. If a lesion is found the UvrA subunits dissociate and the UvrB-DNA preincision complex is formed. This complex is subsequently bound by UvrC and the second UvrB is released. If no lesion is found, the DNA wraps around the other UvrB subunit that will check the other stand for damage. The polypeptide is UvrABC system protein B (Xanthomonas axonopodis pv. citri (strain 306)).